Reading from the N-terminus, the 324-residue chain is Delta-aminolevulinic acid dehydratase (324 aa).

Residues cysteine 120, cysteine 122, and cysteine 130 each coordinate Zn(2+). The active-site Schiff-base intermediate with substrate is the lysine 195. Positions 205 and 216 each coordinate 5-aminolevulinate. Glutamate 232 is a Mg(2+) binding site. The Schiff-base intermediate with substrate role is filled by lysine 247. 5-aminolevulinate contacts are provided by serine 273 and tyrosine 312.

This sequence belongs to the ALAD family. As to quaternary structure, homooctamer. Zn(2+) serves as cofactor.

The enzyme catalyses 2 5-aminolevulinate = porphobilinogen + 2 H2O + H(+). The protein operates within porphyrin-containing compound metabolism; protoporphyrin-IX biosynthesis; coproporphyrinogen-III from 5-aminolevulinate: step 1/4. Allosteric enzyme. Stimulated by magnesium ions. In terms of biological role, catalyzes an early step in the biosynthesis of tetrapyrroles. Binds two molecules of 5-aminolevulinate per subunit, each at a distinct site, and catalyzes their condensation to form porphobilinogen. The sequence is that of Delta-aminolevulinic acid dehydratase (hemB) from Escherichia coli (strain K12).